We begin with the raw amino-acid sequence, 97 residues long: U6-theraphotoxin-Hhn1a 4 (97 aa).

Positions Met1–Ala33 are cleaved as a signal peptide. The propeptide occupies Ser34–Arg61. Cystine bridges form between Cys63–Cys77, Cys70–Cys82, and Cys76–Cys89.

Belongs to the neurotoxin 10 (Hwtx-1) family. 12 (Hntx-12) subfamily. In terms of tissue distribution, expressed by the venom gland.

It is found in the secreted. Its function is as follows. Ion channel inhibitor. This chain is U6-theraphotoxin-Hhn1a 4, found in Cyriopagopus hainanus (Chinese bird spider).